The chain runs to 122 residues: Glycine cleavage system H protein (122 aa).

The Lipoyl-binding domain occupies 22–103 (IGIIGISDYA…AFGSWFFKVE (82 aa)). An N6-lipoyllysine modification is found at K63.

This sequence belongs to the GcvH family. In terms of assembly, the glycine cleavage system is composed of four proteins: P, T, L and H. The cofactor is (R)-lipoate.

The glycine cleavage system catalyzes the degradation of glycine. The H protein shuttles the methylamine group of glycine from the P protein to the T protein. This Treponema denticola (strain ATCC 35405 / DSM 14222 / CIP 103919 / JCM 8153 / KCTC 15104) protein is Glycine cleavage system H protein.